We begin with the raw amino-acid sequence, 801 residues long: K(+)-insensitive pyrophosphate-energized proton pump (801 aa).

The next 5 membrane-spanning stretches (helical) occupy residues V27 to V47, T81 to W101, V109 to A129, G170 to V190, and G201 to T221. K222 provides a ligand contact to substrate. D225, D229, N252, and D255 together coordinate Mg(2+). A run of 7 helical transmembrane segments spans residues A261 to L281, A292 to V312, G328 to L348, I372 to T392, I406 to L426, A429 to T449, and L453 to V473. D483 serves as a coordination point for Mg(2+). 4 consecutive transmembrane segments (helical) span residues A515–S535, V571–V591, L641–A661, and L663–A683. Residues D685, D711, and D715 each contribute to the Ca(2+) site. K718 is a binding site for substrate. 2 helical membrane passes run A724–V744 and L754–I774.

This sequence belongs to the H(+)-translocating pyrophosphatase (TC 3.A.10) family. K(+)-insensitive subfamily. Homodimer. Mg(2+) is required as a cofactor.

Its subcellular location is the cell membrane. The enzyme catalyses diphosphate + H2O + H(+)(in) = 2 phosphate + 2 H(+)(out). Its function is as follows. Proton pump that utilizes the energy of pyrophosphate hydrolysis as the driving force for proton movement across the membrane. Generates a proton motive force. The chain is K(+)-insensitive pyrophosphate-energized proton pump from Streptomyces avermitilis (strain ATCC 31267 / DSM 46492 / JCM 5070 / NBRC 14893 / NCIMB 12804 / NRRL 8165 / MA-4680).